The following is a 507-amino-acid chain: Beta-Ala-His dipeptidase (507 aa).

The N-terminal stretch at 1–26 is a signal peptide; it reads MDPKLGRMAASLLAVLLLLLERGMFS. His132 provides a ligand contact to Zn(2+). Asp134 is an active-site residue. Residue Asp165 coordinates Zn(2+). Glu199 serves as the catalytic Proton acceptor. Glu200 serves as a coordination point for Zn(2+). Ser219 carries the post-translational modification Phosphoserine. Position 228 (Asp228) interacts with Zn(2+). Residues Asn322 and Asn382 are each glycosylated (N-linked (GlcNAc...) asparagine). A Zn(2+)-binding site is contributed by His478.

This sequence belongs to the peptidase M20A family. As to quaternary structure, homodimer. Requires Zn(2+) as cofactor. As to expression, found in serum and adult nervous central system. Absent in serum from patients with homocarnosinosis.

It localises to the secreted. It carries out the reaction Preferential hydrolysis of the beta-Ala-|-His dipeptide (carnosine), and also anserine, Xaa-|-His dipeptides and other dipeptides including homocarnosine.. It catalyses the reaction carnosine + H2O = beta-alanine + L-histidine. The enzyme catalyses anserine + H2O = N(pros)-methyl-L-histidine + beta-alanine. The catalysed reaction is L-alanyl-L-histidine + H2O = L-histidine + L-alanine. It carries out the reaction glycyl-L-histidine + H2O = L-histidine + glycine. It catalyses the reaction L-homocarnosine + H2O = 4-aminobutanoate + L-histidine. With respect to regulation, activated by cadmium ions. Inhibited by the metal chelator 1,10-o-phenantrolin. The inhibitory concentration 50% (IC(50)) is 5 uM. In terms of biological role, catalyzes the peptide bond hydrolysis in Xaa-His dipeptides, displaying the highest activity toward carnosine (beta-alanyl-L-histidine) and anserine (beta-alanyl-3-methyl-histidine). The chain is Beta-Ala-His dipeptidase from Homo sapiens (Human).